We begin with the raw amino-acid sequence, 21 residues long: Japonicin-2 (21 aa).

A disulfide bond links C14 and C21.

In terms of tissue distribution, expressed by the skin glands.

The protein resides in the secreted. Functionally, antibacterial activity against the Gram-negative bacterium E.coli and the Gram-positive bacterium S.aureus. The protein is Japonicin-2 of Rana japonica (Japanese reddish frog).